Here is a 390-residue protein sequence, read N- to C-terminus: Chorismate synthase (390 aa).

NADP(+) contacts are provided by arginine 39 and arginine 45. FMN-binding positions include 132-134 (RSS), 253-254 (NA), glycine 298, 313-317 (KPIPT), and arginine 339.

This sequence belongs to the chorismate synthase family. Homotetramer. The cofactor is FMNH2.

The enzyme catalyses 5-O-(1-carboxyvinyl)-3-phosphoshikimate = chorismate + phosphate. The protein operates within metabolic intermediate biosynthesis; chorismate biosynthesis; chorismate from D-erythrose 4-phosphate and phosphoenolpyruvate: step 7/7. In terms of biological role, catalyzes the anti-1,4-elimination of the C-3 phosphate and the C-6 proR hydrogen from 5-enolpyruvylshikimate-3-phosphate (EPSP) to yield chorismate, which is the branch point compound that serves as the starting substrate for the three terminal pathways of aromatic amino acid biosynthesis. This reaction introduces a second double bond into the aromatic ring system. The polypeptide is Chorismate synthase (Shouchella clausii (strain KSM-K16) (Alkalihalobacillus clausii)).